Consider the following 88-residue polypeptide: MPAKNFRRIPDQTDDQGFLIPGYSAWDCQRCGGEVCRYYGQSDVDCPNCGACYNASGQRLRDDWRGNPSAYDDEVGDLEGFETQHSDY.

Positions 64 to 88 (WRGNPSAYDDEVGDLEGFETQHSDY) are disordered. Positions 71 to 80 (YDDEVGDLEG) are enriched in acidic residues.

This is Gene 86 protein (86) from Mycobacterium (Mycobacteriophage L5).